A 534-amino-acid chain; its full sequence is Probable bifunctional tRNA threonylcarbamoyladenosine biosynthesis protein (534 aa).

The kae1 stretch occupies residues 1–325 (MLCLGIEGTA…YRTDEVDVPW (325 aa)). Residues His-108, His-112, and Tyr-129 each contribute to the Fe cation site. L-threonylcarbamoyladenylate contacts are provided by residues 129–133 (YVSGG), Asp-161, Gly-174, Glu-178, and Asn-258. Asp-286 provides a ligand contact to Fe cation. The 200-residue stretch at 335–534 (LPPDILAKGA…EIESRGRYTD (200 aa)) folds into the Protein kinase domain. ATP-binding positions include 340 to 348 (LAKGAEANI) and Lys-361. Asp-451 functions as the Proton acceptor; for kinase activity in the catalytic mechanism.

The protein in the N-terminal section; belongs to the KAE1 / TsaD family. It in the C-terminal section; belongs to the protein kinase superfamily. Tyr protein kinase family. BUD32 subfamily. Component of the KEOPS complex that consists of Kae1, Bud32, Cgi121 and Pcc1; the whole complex dimerizes. It depends on Fe(2+) as a cofactor.

The protein resides in the cytoplasm. It catalyses the reaction L-seryl-[protein] + ATP = O-phospho-L-seryl-[protein] + ADP + H(+). The enzyme catalyses L-threonyl-[protein] + ATP = O-phospho-L-threonyl-[protein] + ADP + H(+). It carries out the reaction L-threonylcarbamoyladenylate + adenosine(37) in tRNA = N(6)-L-threonylcarbamoyladenosine(37) in tRNA + AMP + H(+). In terms of biological role, required for the formation of a threonylcarbamoyl group on adenosine at position 37 (t(6)A37) in tRNAs that read codons beginning with adenine. Is a component of the KEOPS complex that is probably involved in the transfer of the threonylcarbamoyl moiety of threonylcarbamoyl-AMP (TC-AMP) to the N6 group of A37. The Kae1 domain likely plays a direct catalytic role in this reaction. The Bud32 domain probably displays kinase activity that regulates Kae1 function. This Methanothermobacter thermautotrophicus (strain ATCC 29096 / DSM 1053 / JCM 10044 / NBRC 100330 / Delta H) (Methanobacterium thermoautotrophicum) protein is Probable bifunctional tRNA threonylcarbamoyladenosine biosynthesis protein.